The chain runs to 90 residues: Probable Fe(2+)-trafficking protein (90 aa).

The protein belongs to the Fe(2+)-trafficking protein family.

Functionally, could be a mediator in iron transactions between iron acquisition and iron-requiring processes, such as synthesis and/or repair of Fe-S clusters in biosynthetic enzymes. In Vibrio atlanticus (strain LGP32) (Vibrio splendidus (strain Mel32)), this protein is Probable Fe(2+)-trafficking protein.